A 326-amino-acid polypeptide reads, in one-letter code: Ankyrin repeat domain-containing protein 9 (326 aa).

Positions 1–20 (MPWDTRPGRSANGGPEGPGA) are disordered. An ANK 1 repeat occupies 70-99 (SPSEALLYALVHDHQAYAHYLLATFPRCAL). An Important role in both nutrient sensing and binding/regulation of IMPDH2 motif is present at residues 108–109 (CC). ANK repeat units lie at residues 111-140 (APGP…DFPV) and 157-186 (GGGT…SPGL).

In terms of assembly, part of an E3 ubiquitin-protein ligase complex with Elongin BC (ELOB and ELOC), CUL5 and ANKRD9. Interacts with IMPDH2; leading to ubiquitination of IMPDH2 and its subsequent proteasomal degradation.

Its subcellular location is the cytoplasmic vesicle. It localises to the cytoplasm. The protein resides in the cytosol. It functions in the pathway protein modification; protein ubiquitination. Substrate receptor subunit of a cullin-RING superfamily E3 ligase complex (CUL5-based E3 ubiquitin ligase complex) which mediates the ubiquitination and subsequent proteasomal degradation of target proteins. Depending of the metabolic state of the cell, promotes the proteasomal degradation of IMPDH2, the rate-limiting enzyme in GTP biosynthesis or protects IMPDH2 by stabilizing IMPDH2 filaments assembly. Implicated in different cellular processes, like copper homeostasis and cell proliferation. The polypeptide is Ankyrin repeat domain-containing protein 9 (Ankrd9) (Mus musculus (Mouse)).